The primary structure comprises 675 residues: Methionine--tRNA ligase (675 aa).

Residues 15–25 (PYANGSIHLGH) carry the 'HIGH' region motif. Zn(2+) contacts are provided by Cys-146, Cys-149, Cys-159, and Cys-162. The short motif at 331–335 (KMSKS) is the 'KMSKS' region element. Lys-334 contacts ATP. The tRNA-binding domain maps to 574 to 675 (DFAKIDLRIA…EGAQPGMKVK (102 aa)).

It belongs to the class-I aminoacyl-tRNA synthetase family. MetG type 1 subfamily. In terms of assembly, homodimer. Zn(2+) is required as a cofactor.

It is found in the cytoplasm. The catalysed reaction is tRNA(Met) + L-methionine + ATP = L-methionyl-tRNA(Met) + AMP + diphosphate. Is required not only for elongation of protein synthesis but also for the initiation of all mRNA translation through initiator tRNA(fMet) aminoacylation. In Pseudoalteromonas atlantica (strain T6c / ATCC BAA-1087), this protein is Methionine--tRNA ligase.